A 505-amino-acid polypeptide reads, in one-letter code: Activin receptor type-1B (505 aa).

Residues 1-23 form the signal peptide; the sequence is MAESAGASSFFPLVVLLLAGSGG. Residues 24–126 are Extracellular-facing; the sequence is SGPRGVQALL…EHPSMWGPVE (103 aa). N-linked (GlcNAc...) asparagine glycosylation occurs at asparagine 43. The chain crosses the membrane as a helical span at residues 127–149; it reads LVGIIAGPVFLLFLIIIIVFLVI. Residues 150–505 lie on the Cytoplasmic side of the membrane; the sequence is NYHQRVYHNR…QLSVQEDVKI (356 aa). Residues 177-206 form the GS domain; the sequence is KTLQDLVYDLSTSGSGSGLPLFVQRTVART. The 291-residue stretch at 207-497 folds into the Protein kinase domain; it reads IVLQEIIGKG…LRIKKTLSQL (291 aa). ATP contacts are provided by residues 213–221 and lysine 234; that span reads IGKGRFGEV. Aspartate 335 serves as the catalytic Proton acceptor. Residue tyrosine 380 is modified to Phosphotyrosine.

It belongs to the protein kinase superfamily. TKL Ser/Thr protein kinase family. TGFB receptor subfamily. Forms an activin receptor complex with activin receptor type-2 (ACVR2A or ACVR2B). Part of a complex consisting of MAGI2/ARIP1, ACVR2A, ACVR1B and SMAD3. Interacts with SMAD2 and SMAD3. Interacts with SMAD7. Interacts with FKBP1A. Interacts with IGSF1. Interacts with CRIPTO. Interacts with TDP2. Interacts with TSC22D1/TSC-22. The cofactor is Mg(2+). It depends on Mn(2+) as a cofactor. Post-translationally, autophosphorylated. Phosphorylated by activin receptor type-2 (ACVR2A or ACVR2B) in response to activin-binding at serine and threonine residues in the GS domain. Phosphorylation of ACVR1B by activin receptor type-2 regulates association with SMAD7. Ubiquitinated. Level of ubiquitination is regulated by the SMAD7-SMURF1 complex. In terms of processing, ubiquitinated. In terms of tissue distribution, expressed in many tissues, most strongly in kidney, pancreas, brain, lung, and liver.

It is found in the cell membrane. It catalyses the reaction L-threonyl-[receptor-protein] + ATP = O-phospho-L-threonyl-[receptor-protein] + ADP + H(+). It carries out the reaction L-seryl-[receptor-protein] + ATP = O-phospho-L-seryl-[receptor-protein] + ADP + H(+). Its activity is regulated as follows. Activin receptor type-2 (ACVR2A or ACVR2B) activates the type-1 receptor through phosphorylation of its regulatory GS domain. Transmembrane serine/threonine kinase activin type-1 receptor forming an activin receptor complex with activin receptor type-2 (ACVR2A or ACVR2B). Transduces the activin signal from the cell surface to the cytoplasm and is thus regulating a many physiological and pathological processes including neuronal differentiation and neuronal survival, hair follicle development and cycling, FSH production by the pituitary gland, wound healing, extracellular matrix production, immunosuppression and carcinogenesis. Activin is also thought to have a paracrine or autocrine role in follicular development in the ovary. Within the receptor complex, type-2 receptors (ACVR2A and/or ACVR2B) act as a primary activin receptors whereas the type-1 receptors like ACVR1B act as downstream transducers of activin signals. Activin binds to type-2 receptor at the plasma membrane and activates its serine-threonine kinase. The activated receptor type-2 then phosphorylates and activates the type-1 receptor such as ACVR1B. Once activated, the type-1 receptor binds and phosphorylates the SMAD proteins SMAD2 and SMAD3, on serine residues of the C-terminal tail. Soon after their association with the activin receptor and subsequent phosphorylation, SMAD2 and SMAD3 are released into the cytoplasm where they interact with the common partner SMAD4. This SMAD complex translocates into the nucleus where it mediates activin-induced transcription. Inhibitory SMAD7, which is recruited to ACVR1B through FKBP1A, can prevent the association of SMAD2 and SMAD3 with the activin receptor complex, thereby blocking the activin signal. Activin signal transduction is also antagonized by the binding to the receptor of inhibin-B via the IGSF1 inhibin coreceptor. ACVR1B also phosphorylates TDP2. In Homo sapiens (Human), this protein is Activin receptor type-1B (ACVR1B).